The following is a 450-amino-acid chain: MTETASRRTLHITTWGCQMNVYDSGRMADVLRPLGYRQVATQDADMVILNTCHIRERASEKLFSELGRLRALKESRGGAMMIAVAGCVAQAEGAEILARAPHVDLVVGSQAYHRLPELIAEIEAKRRAVIDTDFPAAQKFDLLPEDQASQGPIAFLAIQEGCDKFCTFCVVPYTRGAEASRPAAAILAEARRLVAGGAREIALLGQNVNAWHGEAPDGATWNLARLLAELADIDGLARLRYTTSHPRDMDAALIAAHRDNPKLMPFLHLPVQSGSDAILARMNRRHGADLFRRIAGELRAARPDIALSSDFIVGFPGETDADFAATMRLVRETGFALAYSFKYSRRPGTPAADAADQIDEAVKDARLQELQAVLRDQQHAFNRAQVGRSFEVLFTGPGRHPGQSAGRSPYLQPVVVDNADIPPGTLRTVKIVQSNPNSLMASLTQEQIAA.

The MTTase N-terminal domain occupies 8 to 124; the sequence is RTLHITTWGC…LPELIAEIEA (117 aa). Residues Cys-17, Cys-52, Cys-87, Cys-162, Cys-166, and Cys-169 each contribute to the [4Fe-4S] cluster site. In terms of domain architecture, Radical SAM core spans 148–380; it reads ASQGPIAFLA…QAVLRDQQHA (233 aa). A TRAM domain is found at 383–445; that stretch reads RAQVGRSFEV…PNSLMASLTQ (63 aa).

The protein belongs to the methylthiotransferase family. MiaB subfamily. Monomer. Requires [4Fe-4S] cluster as cofactor.

Its subcellular location is the cytoplasm. The enzyme catalyses N(6)-dimethylallyladenosine(37) in tRNA + (sulfur carrier)-SH + AH2 + 2 S-adenosyl-L-methionine = 2-methylsulfanyl-N(6)-dimethylallyladenosine(37) in tRNA + (sulfur carrier)-H + 5'-deoxyadenosine + L-methionine + A + S-adenosyl-L-homocysteine + 2 H(+). Catalyzes the methylthiolation of N6-(dimethylallyl)adenosine (i(6)A), leading to the formation of 2-methylthio-N6-(dimethylallyl)adenosine (ms(2)i(6)A) at position 37 in tRNAs that read codons beginning with uridine. In Acidiphilium cryptum (strain JF-5), this protein is tRNA-2-methylthio-N(6)-dimethylallyladenosine synthase.